A 245-amino-acid polypeptide reads, in one-letter code: 5'-nucleotidase SurE (245 aa).

The a divalent metal cation site is built by Asp-8, Asp-9, Ser-39, and Asn-91.

It belongs to the SurE nucleotidase family. The cofactor is a divalent metal cation.

It is found in the cytoplasm. It catalyses the reaction a ribonucleoside 5'-phosphate + H2O = a ribonucleoside + phosphate. Functionally, nucleotidase that shows phosphatase activity on nucleoside 5'-monophosphates. In Herminiimonas arsenicoxydans, this protein is 5'-nucleotidase SurE.